The chain runs to 636 residues: Putative cysteine-rich receptor-like protein kinase 33 (636 aa).

An N-terminal signal peptide occupies residues Met-1–Ser-25. Gnk2-homologous domains lie at Gln-26–Phe-128 and Tyr-138–Phe-245. At Gln-26–Gly-266 the chain is on the extracellular side. N-linked (GlcNAc...) asparagine glycosylation is found at Asn-29, Asn-63, Asn-105, Asn-125, Asn-149, Asn-173, Asn-185, Asn-188, Asn-250, and Asn-262. A helical membrane pass occupies residues Phe-267–Val-287. Residues Val-288–Arg-636 are Cytoplasmic-facing. Residues Phe-321–Leu-600 form the Protein kinase domain. ATP is bound by residues Leu-327–Val-335 and Lys-349. Tyr-394 is modified (phosphotyrosine). Asp-446 functions as the Proton acceptor in the catalytic mechanism. The residue at position 450 (Ser-450) is a Phosphoserine. Thr-486 carries the post-translational modification Phosphothreonine. Tyr-494 carries the phosphotyrosine modification.

Belongs to the protein kinase superfamily. Ser/Thr protein kinase family. CRK subfamily.

The protein localises to the membrane. The enzyme catalyses L-seryl-[protein] + ATP = O-phospho-L-seryl-[protein] + ADP + H(+). It catalyses the reaction L-threonyl-[protein] + ATP = O-phospho-L-threonyl-[protein] + ADP + H(+). This is Putative cysteine-rich receptor-like protein kinase 33 (CRK33) from Arabidopsis thaliana (Mouse-ear cress).